Consider the following 293-residue polypeptide: Probable porphobilinogen deaminase (293 aa).

At Cys-233 the chain carries S-(dipyrrolylmethanemethyl)cysteine.

It belongs to the HMBS family. Requires dipyrromethane as cofactor.

The catalysed reaction is 4 porphobilinogen + H2O = hydroxymethylbilane + 4 NH4(+). It participates in porphyrin-containing compound metabolism; protoporphyrin-IX biosynthesis; coproporphyrinogen-III from 5-aminolevulinate: step 2/4. In terms of biological role, tetrapolymerization of the monopyrrole PBG into the hydroxymethylbilane pre-uroporphyrinogen in several discrete steps. This chain is Probable porphobilinogen deaminase, found in Saccharolobus islandicus (strain Y.G.57.14 / Yellowstone #1) (Sulfolobus islandicus).